The following is a 535-amino-acid chain: Aklavinone 12-hydroxylase RdmE (535 aa).

FAD is bound by residues Leu-15, Gly-16, Glu-35, Gln-119, and Leu-143. Catalysis depends on Tyr-224, which acts as the Proton acceptor. Residue Asp-308 participates in FAD binding. Residue Gly-317 coordinates aklavinone.

The protein belongs to the PheA/TfdB FAD monooxygenase family. Monomer. FAD serves as cofactor.

The catalysed reaction is aklavinone + NADPH + O2 + H(+) = epsilon-rhodomycinone + NADP(+) + H2O. It participates in antibiotic biosynthesis; daunorubicin biosynthesis. The protein operates within antibiotic biosynthesis; carminomycin biosynthesis. Its pathway is antibiotic biosynthesis; rhodomycin biosynthesis. Its activity is regulated as follows. Inhibited by phenylglyoxal and 2,3-butanedione. NADP provides a partial protection against inhibition by phenylglyoxal. Increasing the methanol concentration in the assay causes inhibition of the enzyme. Involved in the biosynthesis of the anthracyclines carminomycin, rhodomycin and daunorubicin (daunomycin) which are aromatic polyketide antibiotics that exhibit high cytotoxicity and are widely applied in the chemotherapy of a variety of cancers. Catalyzes the incorporation of a hydroxyl group at position C-11 of aklavinone, resulting in epsilon-rhodomycinone. It cannot accept substrates glycosylated at position C-7 and is specific for the C-9R configuration of anthracyclines. It can use both NAD or NADP but it is slowly inactivated in the presence of NADH. The sequence is that of Aklavinone 12-hydroxylase RdmE (rdmE) from Streptomyces purpurascens.